We begin with the raw amino-acid sequence, 455 residues long: Chromosomal replication initiator protein DnaA (455 aa).

Residues 1 to 75 are domain I, interacts with DnaA modulators; that stretch reads MLERNDLWNL…AMQATNEQIR (75 aa). The domain II stretch occupies residues 75–117; sequence RPVMITEEERQQLTRDKDSQVTTGNVAGQQPTTATTPTFMRET. Over residues 84–93 the composition is skewed to basic and acidic residues; sequence RQQLTRDKDS. The disordered stretch occupies residues 84–107; sequence RQQLTRDKDSQVTTGNVAGQQPTT. The tract at residues 118 to 334 is domain III, AAA+ region; that stretch reads KLNPKYTFDT…GALARVQAYS (217 aa). ATP contacts are provided by Gly-162, Gly-164, Lys-165, and Thr-166. A domain IV, binds dsDNA region spans residues 335–455; the sequence is RLNNSPITTS…VGDLTGQLKS (121 aa).

Belongs to the DnaA family. As to quaternary structure, oligomerizes as a right-handed, spiral filament on DNA at oriC.

The protein localises to the cytoplasm. Plays an essential role in the initiation and regulation of chromosomal replication. ATP-DnaA binds to the origin of replication (oriC) to initiate formation of the DNA replication initiation complex once per cell cycle. Binds the DnaA box (a 9 base pair repeat at the origin) and separates the double-stranded (ds)DNA. Forms a right-handed helical filament on oriC DNA; dsDNA binds to the exterior of the filament while single-stranded (ss)DNA is stabiized in the filament's interior. The ATP-DnaA-oriC complex binds and stabilizes one strand of the AT-rich DNA unwinding element (DUE), permitting loading of DNA polymerase. After initiation quickly degrades to an ADP-DnaA complex that is not apt for DNA replication. Binds acidic phospholipids. This Lactiplantibacillus plantarum (strain ATCC BAA-793 / NCIMB 8826 / WCFS1) (Lactobacillus plantarum) protein is Chromosomal replication initiator protein DnaA.